Here is a 187-residue protein sequence, read N- to C-terminus: Interferon beta (187 aa).

The N-terminal stretch at 1-21 (MTSRSLLPFVLSLLLPRIIMA) is a signal peptide. Y24 carries the post-translational modification Phosphotyrosine. C53 and C162 are joined by a disulfide. Residues N76, N95, N132, and N158 are each glycosylated (N-linked (GlcNAc...) asparagine).

This sequence belongs to the alpha/beta interferon family. As to quaternary structure, monomer.

It is found in the secreted. Functionally, type I interferon cytokine that plays a key role in the innate immune response to infection, developing tumors and other inflammatory stimuli. Signals via binding to high-affinity (IFNAR2) and low-affinity (IFNAR1) heterodimeric receptor, activating the canonical Jak-STAT signaling pathway resulting in transcriptional activation or repression of interferon-regulated genes that encode the effectors of the interferon response, such as antiviral proteins, regulators of cell proliferation and differentiation, and immunoregulatory proteins. Signals mostly via binding to a IFNAR1-IFNAR2 heterodimeric receptor, but can also function with IFNAR1 alone and independently of Jak-STAT pathways. Elicits a wide variety of responses, including antiviral and antibacterial activities, and can regulate the development of B-cells, myelopoiesis and lipopolysaccharide (LPS)-inducible production of tumor necrosis factor. Plays a role in neuronal homeostasis by regulating dopamine turnover and protecting dopaminergic neurons: acts by promoting neuronal autophagy and alpha-synuclein clearance, thereby preventing dopaminergic neuron loss. IFNB1 is more potent than interferon-alpha (IFN-alpha) in inducing the apoptotic and antiproliferative pathways required for control of tumor cell growth. The sequence is that of Interferon beta (IFNB1) from Tachyglossus aculeatus aculeatus (Southeast Australian short-beaked echidna).